The sequence spans 306 residues: MEVTFFGTSAGLPTKERNTQAIALNLEPYSNSIWLFDVGEGTQHQILHHAIKLGKVTHIFITHMHGDHIFGLPGLLSSRSFQGGEQKPLTLVGPKGIKAYVEMSMNLSESHLNYPITYIEIDDHLTYHHDGFTVEAHLLNHGIPSYGYRVMAPETTGTINVEALKNIGLEPGPKYQEVKSHDTFEHNGQVYQSKDFRGESKQGPVVAIFGDTKPCSNERVISRDADVMVHEATYIDGEKHLANNYHHSHIEDVFALIKEANVKRTLITHLSNRYNTEDINEIYQILIQNEDTPNFNFVKDFDSFKV.

Residues histidine 63, histidine 65, aspartate 67, histidine 68, histidine 141, aspartate 211, and histidine 269 each contribute to the Zn(2+) site. Catalysis depends on aspartate 67, which acts as the Proton acceptor.

The protein belongs to the RNase Z family. As to quaternary structure, homodimer. Requires Zn(2+) as cofactor.

It catalyses the reaction Endonucleolytic cleavage of RNA, removing extra 3' nucleotides from tRNA precursor, generating 3' termini of tRNAs. A 3'-hydroxy group is left at the tRNA terminus and a 5'-phosphoryl group is left at the trailer molecule.. In terms of biological role, zinc phosphodiesterase, which displays some tRNA 3'-processing endonuclease activity. Probably involved in tRNA maturation, by removing a 3'-trailer from precursor tRNA. The protein is Ribonuclease Z of Staphylococcus aureus (strain Mu3 / ATCC 700698).